A 219-amino-acid chain; its full sequence is RNA-free ribonuclease P (219 aa).

This sequence belongs to the HARP family.

It carries out the reaction Endonucleolytic cleavage of RNA, removing 5'-extranucleotides from tRNA precursor.. In terms of biological role, RNA-free RNase P that catalyzes the removal of the 5'-leader sequence from pre-tRNA to produce the mature 5'-terminus. This is RNA-free ribonuclease P from Staphylothermus marinus (strain ATCC 43588 / DSM 3639 / JCM 9404 / F1).